The sequence spans 127 residues: Aspartate 1-decarboxylase (127 aa).

Ser25 serves as the catalytic Schiff-base intermediate with substrate; via pyruvic acid. Ser25 is modified (pyruvic acid (Ser)). Residue Thr57 coordinates substrate. Tyr58 serves as the catalytic Proton donor. 73 to 75 (GAA) serves as a coordination point for substrate.

Belongs to the PanD family. In terms of assembly, heterooctamer of four alpha and four beta subunits. Requires pyruvate as cofactor. Is synthesized initially as an inactive proenzyme, which is activated by self-cleavage at a specific serine bond to produce a beta-subunit with a hydroxyl group at its C-terminus and an alpha-subunit with a pyruvoyl group at its N-terminus.

It is found in the cytoplasm. It catalyses the reaction L-aspartate + H(+) = beta-alanine + CO2. It participates in cofactor biosynthesis; (R)-pantothenate biosynthesis; beta-alanine from L-aspartate: step 1/1. In terms of biological role, catalyzes the pyruvoyl-dependent decarboxylation of aspartate to produce beta-alanine. The chain is Aspartate 1-decarboxylase from Bacillus cytotoxicus (strain DSM 22905 / CIP 110041 / 391-98 / NVH 391-98).